Here is a 374-residue protein sequence, read N- to C-terminus: Large ribosomal subunit protein uL4 (374 aa).

A disordered region spans residues 336–355 (EKAMAKGMQNKKNREARHAA).

This sequence belongs to the universal ribosomal protein uL4 family.

The chain is Large ribosomal subunit protein uL4 (RPL4) from Trypanosoma brucei brucei.